We begin with the raw amino-acid sequence, 154 residues long: Aminoalkylphosphonate N-acetyltransferase (154 aa).

One can recognise an N-acetyltransferase domain in the interval 14-154 (CELRHATTED…QSHFRFTKAL (141 aa)).

Homodimer. Requires a divalent metal cation as cofactor.

The enzyme catalyses aminomethylphosphonate + acetyl-CoA = 2-N-acetamidomethylphosphonate + CoA. The catalysed reaction is (S)-1-aminoethylphosphonate + acetyl-CoA = [(1S)-1-acetamidoethyl]phosphonate + CoA. Functionally, aminoalkylphosphonate N-acetyltransferase which is able to acetylate a range of aminoalkylphosphonic acids, including (S)-1-aminoethylphosphonate ((S)-1AEP) and 2-aminoethylphosphonate, using acetyl-CoA as acetyl donor. Its physiological role in S.typhimurium is unclear. However, by acetylating (S)-1AEP, PhnO would protect against the deleterious effects of (S)-1AEP, a structural analog of D-alanine that has antibacterial properties. This is Aminoalkylphosphonate N-acetyltransferase from Salmonella typhimurium (strain LT2 / SGSC1412 / ATCC 700720).